A 351-amino-acid polypeptide reads, in one-letter code: Auxin efflux carrier component 5 (351 aa).

Helical transmembrane passes span 7-27 (VYKV…GYGS), 39-59 (CDAI…IEFT), 71-91 (FIAA…LWAK), 100-120 (WSIT…GVPL), 132-152 (LVVQ…LFVL), 210-230 (ILGI…PGIL), 234-254 (ILIM…IFMA), 271-291 (MVLK…VLGL), 295-315 (VLRV…FIFA), and 329-349 (VIFG…ALEF).

The protein belongs to the auxin efflux carrier (TC 2.A.69.1) family. In terms of tissue distribution, expressed in elongating parts of hypocotyl, cotyledon vasculature and guard cells. Detected in root pericycle and root tip and at later developmental stages in leaves, stems and flowers. Expressed in veins of mature leaves.

It localises to the endoplasmic reticulum membrane. The protein localises to the cell membrane. In terms of biological role, auxin transporter regulating intracellular auxin homeostasis and metabolism. Mediates the auxin transport from the cytosol into the lumen of the endoplasmic reticulum. May also act as an auxin efflux carrier when located to the cell membrane. PIN5 and PIN8 may have an antagonistic/compensatory activity. Involved in unfolded protein response (UPR) activation. Involved in the control of vein patterning. Promotes vein formation. PIN5, PIN6, and PIN8 control vein network geometry, but they are expressed in mutually exclusive domains of leaf vascular cells. The polypeptide is Auxin efflux carrier component 5 (Arabidopsis thaliana (Mouse-ear cress)).